The following is a 156-amino-acid chain: ATP synthase subunit b (156 aa).

The chain crosses the membrane as a helical span at residues 13–33; the sequence is AFIIFVWFCMKFVWPPLMNAI.

This sequence belongs to the ATPase B chain family. In terms of assembly, F-type ATPases have 2 components, F(1) - the catalytic core - and F(0) - the membrane proton channel. F(1) has five subunits: alpha(3), beta(3), gamma(1), delta(1), epsilon(1). F(0) has three main subunits: a(1), b(2) and c(10-14). The alpha and beta chains form an alternating ring which encloses part of the gamma chain. F(1) is attached to F(0) by a central stalk formed by the gamma and epsilon chains, while a peripheral stalk is formed by the delta and b chains.

Its subcellular location is the cell inner membrane. Functionally, f(1)F(0) ATP synthase produces ATP from ADP in the presence of a proton or sodium gradient. F-type ATPases consist of two structural domains, F(1) containing the extramembraneous catalytic core and F(0) containing the membrane proton channel, linked together by a central stalk and a peripheral stalk. During catalysis, ATP synthesis in the catalytic domain of F(1) is coupled via a rotary mechanism of the central stalk subunits to proton translocation. Component of the F(0) channel, it forms part of the peripheral stalk, linking F(1) to F(0). The chain is ATP synthase subunit b from Shewanella sediminis (strain HAW-EB3).